The following is a 224-amino-acid chain: DNA repair and recombination protein RadB (224 aa).

The protein belongs to the eukaryotic RecA-like protein family. RadB subfamily.

Its function is as follows. Involved in DNA repair and in homologous recombination. May regulate the cleavage reactions of the branch-structured DNA. Has a very weak ATPase activity that is not stimulated by DNA. Binds DNA but does not promote DNA strands exchange. The chain is DNA repair and recombination protein RadB from Methanoculleus marisnigri (strain ATCC 35101 / DSM 1498 / JR1).